The primary structure comprises 151 residues: Ribosome maturation factor RimP (151 aa).

The protein belongs to the RimP family.

It is found in the cytoplasm. Required for maturation of 30S ribosomal subunits. The polypeptide is Ribosome maturation factor RimP (Shewanella sp. (strain ANA-3)).